We begin with the raw amino-acid sequence, 1229 residues long: uncharacterized protein (1229 aa).

The N-terminal stretch at 1–19 (MKYFLLLFLLVLSFTLVES) is a signal peptide. 6 N-linked (GlcNAc...) asparagine glycosylation sites follow: Asn-238, Asn-270, Asn-370, Asn-538, Asn-691, and Asn-701. The Galectin 1 domain maps to 678–813 (RMVNFANVME…QWNIDTVKMN (136 aa)). Over residues 818 to 829 (HTTTVEPSTPLE) the composition is skewed to polar residues. Residues 818 to 903 (HTTTVEPSTP…TLPPTTTPYN (86 aa)) form a disordered region. The span at 830 to 846 (TASTSQSTPSATLTSTT) shows a compositional bias: low complexity. The span at 847 to 869 (ENIPSTSKIPETSTTQRPTSPIL) shows a compositional bias: polar residues. Over residues 870-901 (TSGATSTSSSTESTTTSPTTSTTTTLPPTTTP) the composition is skewed to low complexity. Residues Asn-903, Asn-938, and Asn-948 are each glycosylated (N-linked (GlcNAc...) asparagine). Positions 925–1059 (RPVVFSRYME…ESTIDTVSMA (135 aa)) constitute a Galectin 2 domain. The interval 1061–1087 (VRPPTTPTTTTSTTTTTTPKLTTTSTL) is disordered. Residues 1067-1087 (PTTTTSTTTTTTPKLTTTSTL) show a composition bias toward low complexity. A glycan (N-linked (GlcNAc...) asparagine) is linked at Asn-1146.

This is an uncharacterized protein from Caenorhabditis elegans.